The primary structure comprises 266 residues: Gasdermin bGSDM (266 aa).

Cys3 is lipidated: S-palmitoyl cysteine. A run of 4 beta stranded transmembrane segments spans residues 69-85 (ISGQ…GLSI), 97-115 (KLGL…FEFQ), 163-180 (KFTI…ELTI), and 189-205 (GNVK…KICY).

The protein belongs to the bacterial gasdermin family. In terms of assembly, monomer. Forms large, homooligomeric ring-shaped pores when inserted in membranes. Post-translationally, palmitoylation helps stabilize the inactive state; may self palmitoylate. Palmitoylation plays a significant role in pore formation.

It is found in the cytoplasm. The protein resides in the cell inner membrane. The full-length protein before cleavage is inactive: intramolecular interactions between the N-terminal domain and the C-terminal region as well as the lipid modification, mediate autoinhibition. The pyroptosis-like-inducing activity is carried by the released N-terminal domain (Gasdermin bGSDM, N-terminus). Precursor of a pore-forming protein involved in defense against bacteriophages. Expression of bGSDM and the neighboring protease gene (Ga0182885_104520) is toxic in E.coli. Cleavage of this precursor by its dedicated protease releases the active moiety (gasdermin bGSDM, N-terminus) which inserts into membranes, forming pores and triggering cell death. Functionally, pore-forming protein that causes membrane permeabilization via a pyroptosis-like activity. Makes ring-like pores when released. The sequence is that of Gasdermin bGSDM from Desulfuromonadales bacterium.